The primary structure comprises 868 residues: Translation initiation factor IF-2 (868 aa).

Over residues S199 to V209 the composition is skewed to basic and acidic residues. Residues S199–E269 form a disordered region. Residues R249 to G260 show a composition bias toward basic residues. In terms of domain architecture, tr-type G spans G368–K537. The G1 stretch occupies residues G377–T384. G377–T384 provides a ligand contact to GTP. Residues G402–H406 form a G2 region. The segment at D423–G426 is G3. GTP-binding positions include D423–H427 and N477–D480. Residues N477 to D480 form a G4 region. Positions S513–K515 are G5.

This sequence belongs to the TRAFAC class translation factor GTPase superfamily. Classic translation factor GTPase family. IF-2 subfamily.

The protein localises to the cytoplasm. In terms of biological role, one of the essential components for the initiation of protein synthesis. Protects formylmethionyl-tRNA from spontaneous hydrolysis and promotes its binding to the 30S ribosomal subunits. Also involved in the hydrolysis of GTP during the formation of the 70S ribosomal complex. This is Translation initiation factor IF-2 from Legionella pneumophila (strain Paris).